We begin with the raw amino-acid sequence, 240 residues long: Ribosome maturation protein SDO1 homolog (240 aa).

This sequence belongs to the SDO1/SBDS family.

The protein is Ribosome maturation protein SDO1 homolog of Methanocaldococcus jannaschii (strain ATCC 43067 / DSM 2661 / JAL-1 / JCM 10045 / NBRC 100440) (Methanococcus jannaschii).